A 200-amino-acid chain; its full sequence is WUSCHEL-related homeobox 9 (200 aa).

Residues 10–74 constitute a DNA-binding region (homeobox; WUS-type); sequence VKCGRWNPTA…NHKARERHHH (65 aa). A compositionally biased stretch (basic residues) spans 70–80; the sequence is ERHHHKKRRRG. Positions 70 to 118 are disordered; the sequence is ERHHHKKRRRGASSPDSGSNDDDGRAAAHEGDADLVLQPPESKREARSY. A compositionally biased stretch (basic and acidic residues) spans 91 to 101; that stretch reads DDGRAAAHEGD.

Belongs to the WUS homeobox family. In terms of tissue distribution, specifically expressed in the central cells of the quiescent center (QC) of the root.

It is found in the nucleus. In terms of biological role, transcription factor which may be involved in the specification and maintenance of the stem cells (QC cells) in the root apical meristem (RAM). This chain is WUSCHEL-related homeobox 9 (WOX9), found in Oryza sativa subsp. japonica (Rice).